The primary structure comprises 224 residues: GrpE protein homolog 2, mitochondrial (224 aa).

Residues 1 to 31 constitute a mitochondrion transit peptide; it reads MAARSLWAVQRLQRLLASGAMSESRGWLHPF. Lys141 bears the N6-acetyllysine mark.

The protein belongs to the GrpE family. Probable component of the PAM complex at least composed of a mitochondrial HSP70 protein, GRPEL1 or GRPEL2, TIMM44, TIMM16/PAM16 and TIMM14/DNAJC19. As to expression, ubiquitous.

The protein resides in the mitochondrion matrix. Essential component of the PAM complex, a complex required for the translocation of transit peptide-containing proteins from the inner membrane into the mitochondrial matrix in an ATP-dependent manner. Seems to control the nucleotide-dependent binding of mitochondrial HSP70 to substrate proteins. Stimulates ATPase activity of mt-HSP70. May also serve to modulate the interconversion of oligomeric (inactive) and monomeric (active) forms of mt-HSP70. The polypeptide is GrpE protein homolog 2, mitochondrial (Grpel2) (Mus musculus (Mouse)).